A 610-amino-acid chain; its full sequence is Transcription termination factor Rho (610 aa).

The tract at residues 117–227 (EVSRRERRGA…GDGAEAELRQ (111 aa)) is disordered. Residues 118-131 (VSRRERRGASREAD) are compositionally biased toward basic and acidic residues. Over residues 178–187 (GVEQQSSSLQ) the composition is skewed to polar residues. Over residues 189-198 (RGDDDGEGRQ) the composition is skewed to basic and acidic residues. Over residues 199-214 (GRRGRRFRDRDRRRRG) the composition is skewed to basic residues. Residues 215 to 227 (ERSGDGAEAELRQ) are compositionally biased toward basic and acidic residues. The region spanning 231 to 309 (VQPVAGILDV…VRLDSINGGS (79 aa)) is the Rho RNA-BD domain. ATP is bound by residues 352–357 (GKGQRA), 364–369 (KAGKTT), and arginine 395.

This sequence belongs to the Rho family. In terms of assembly, homohexamer. The homohexamer assembles into an open ring structure.

Its function is as follows. Facilitates transcription termination by a mechanism that involves Rho binding to the nascent RNA, activation of Rho's RNA-dependent ATPase activity, and release of the mRNA from the DNA template. The chain is Transcription termination factor Rho from Mycobacterium leprae (strain TN).